Reading from the N-terminus, the 397-residue chain is tRNA pseudouridine synthase D (397 aa).

Asp76 (nucleophile) is an active-site residue. The 211-residue stretch at 151 to 361 (GVPNFFGEQR…MEGERRPLRV (211 aa)) folds into the TRUD domain.

This sequence belongs to the pseudouridine synthase TruD family.

The catalysed reaction is uridine(13) in tRNA = pseudouridine(13) in tRNA. Functionally, responsible for synthesis of pseudouridine from uracil-13 in transfer RNAs. This chain is tRNA pseudouridine synthase D, found in Geotalea daltonii (strain DSM 22248 / JCM 15807 / FRC-32) (Geobacter daltonii).